A 1260-amino-acid chain; its full sequence is UPF0507 protein LELG_01076 (1260 aa).

A VPS9 domain is found at 336–493 (ADYDPSATKV…LSDNDKGLNT (158 aa)).

Belongs to the UPF0507 family.

This chain is UPF0507 protein LELG_01076, found in Lodderomyces elongisporus (strain ATCC 11503 / CBS 2605 / JCM 1781 / NBRC 1676 / NRRL YB-4239) (Yeast).